The chain runs to 539 residues: GMP synthase [glutamine-hydrolyzing] (539 aa).

One can recognise a Glutamine amidotransferase type-1 domain in the interval 4 to 203; sequence KILILDFGSQ…VHDICGCKSD (200 aa). Cys82 functions as the Nucleophile in the catalytic mechanism. Catalysis depends on residues His177 and Glu179. Residues 204–395 enclose the GMPS ATP-PPase domain; the sequence is WNMPDYIAEA…LGLPHDMVYR (192 aa). ATP is bound at residue 231-237; it reads SGGVDSS.

Homodimer.

It carries out the reaction XMP + L-glutamine + ATP + H2O = GMP + L-glutamate + AMP + diphosphate + 2 H(+). Its pathway is purine metabolism; GMP biosynthesis; GMP from XMP (L-Gln route): step 1/1. Functionally, catalyzes the synthesis of GMP from XMP. This is GMP synthase [glutamine-hydrolyzing] from Janthinobacterium sp. (strain Marseille) (Minibacterium massiliensis).